A 728-amino-acid chain; its full sequence is Polyribonucleotide nucleotidyltransferase (728 aa).

Asp513 and Asp519 together coordinate Mg(2+). Residues Pro580–Ile640 form the KH domain. An S1 motif domain is found at Glu650–Lys724.

This sequence belongs to the polyribonucleotide nucleotidyltransferase family. It depends on Mg(2+) as a cofactor.

It is found in the cytoplasm. It carries out the reaction RNA(n+1) + phosphate = RNA(n) + a ribonucleoside 5'-diphosphate. Its function is as follows. Involved in mRNA degradation. Catalyzes the phosphorolysis of single-stranded polyribonucleotides processively in the 3'- to 5'-direction. The protein is Polyribonucleotide nucleotidyltransferase of Phytoplasma mali (strain AT).